Reading from the N-terminus, the 272-residue chain is uncharacterized protein (272 aa).

The next 4 helical transmembrane spans lie at 9–29 (PVGF…GSGV), 38–58 (LTSF…SFPP), 154–174 (AGEF…VLML), and 188–208 (AIAL…FNPI). Over 209–272 (AAKLEEKTES…KTKKGSVHEA (64 aa)) the chain is Cytoplasmic.

It belongs to the MotA family.

It is found in the cell membrane. Functionally, may be involved in some transport function. This is an uncharacterized protein from Bacillus subtilis (strain 168).